We begin with the raw amino-acid sequence, 550 residues long: Hydroxylamine reductase (550 aa).

[2Fe-2S] cluster is bound by residues Cys3, Cys6, Cys18, and Cys25. 8 residues coordinate hybrid [4Fe-2O-2S] cluster: His249, Glu273, Cys317, Cys405, Cys433, Cys458, Glu492, and Lys494. Cys405 bears the Cysteine persulfide mark.

Belongs to the HCP family. It depends on [2Fe-2S] cluster as a cofactor. Hybrid [4Fe-2O-2S] cluster is required as a cofactor.

The protein resides in the cytoplasm. The catalysed reaction is A + NH4(+) + H2O = hydroxylamine + AH2 + H(+). Functionally, catalyzes the reduction of hydroxylamine to form NH(3) and H(2)O. This Escherichia coli O139:H28 (strain E24377A / ETEC) protein is Hydroxylamine reductase.